The following is a 417-amino-acid chain: Zinc finger CCCH domain-containing protein ZFN-like (417 aa).

2 consecutive C3H1-type zinc fingers follow at residues 31-58 (PGEP…HPPN) and 75-103 (RLGQ…HPKD). The C3H1-type 3; degenerate zinc-finger motif lies at 121–149 (RPNESERAYYLRTGQCKFGNTCKFHHPQP). 2 C3H1-type zinc fingers span residues 278–306 (RPDQ…HPRE) and 324–352 (RPGE…HPMG). Residues 383-417 (SSEGLVESGTAKPRRLSLSETRPIPPGDDNIDDEG) are disordered.

The protein resides in the nucleus. This chain is Zinc finger CCCH domain-containing protein ZFN-like, found in Pisum sativum (Garden pea).